The sequence spans 192 residues: Cysteine and glycine-rich protein 1 (192 aa).

One can recognise an LIM zinc-binding 1 domain in the interval 10 to 61 (CGVCQKAVYFAEEVQCEGSSFHKSCFLCMVCKKNLDSTTVAVHGDEIYCKSC). Residues 64 to 69 (KKYGPK) carry the Nuclear localization signal motif. One can recognise an LIM zinc-binding 2 domain in the interval 118-169 (CPRCGQAVYAAEKVIGAGKSWHKSCFRCAKCGKSLESTTLADKDGEIYCKGC).

Probable monomer. Interacts with ZYX. Most prominent in tissues that are enriched in smooth muscle cells, such as gizzard, stomach, and intestine. Lower level in the heart, no expression in liver, skeletal muscle, or brain.

Its subcellular location is the nucleus. The protein resides in the cytoplasm. It localises to the cytoskeleton. Heat stable protein, that interacts with zyxin/ZYX. May be a component of a signal transduction pathway that mediates adhesion-stimulated changes in gene expression. This chain is Cysteine and glycine-rich protein 1 (CSRP1), found in Gallus gallus (Chicken).